The sequence spans 224 residues: UPF0758 protein PLES_57141 (224 aa).

One can recognise an MPN domain in the interval 102 to 224 (ILESPQAVRD…PLSLAEYGWL (123 aa)). Zn(2+)-binding residues include H173, H175, and D186. Positions 173–186 (HNHPSGDARPSLAD) match the JAMM motif motif.

This sequence belongs to the UPF0758 family.

The protein is UPF0758 protein PLES_57141 of Pseudomonas aeruginosa (strain LESB58).